Consider the following 348-residue polypeptide: Endoplasmic reticulum junction formation protein lunapark-A (348 aa).

The Cytoplasmic portion of the chain corresponds to 1–43; it reads MSVFCLQAKPTTVEILEGIDKDIQILEDYSVKYQRQMKAVVGR. Residues 44-64 traverse the membrane as a helical segment; that stretch reads LLLYSILLYLMAGVVVYSWYL. Topologically, residues 65 to 67 are lumenal; that stretch reads PEQ. Residues 68-88 form a helical membrane-spanning segment; that stretch reads LMGRLVLGLPFLLFPLLVWIL. Over 89–348 the chain is Cytoplasmic; the sequence is RKVLILFFAR…EEDKQSDSGD (260 aa). A coiled-coil region spans residues 105–126; the sequence is FKLEDLKAQKRKILEDVMETET. Residues 142-211 are disordered; sequence KKKTDFDSTP…HSAPGGPPER (70 aa). The C4-type; plays a role in ER morphology zinc-finger motif lies at 277–302; sequence CQQCLSHNGMALKEEFEYVAFRCAYC. A disordered region spans residues 313-348; the sequence is PQAPRLPETAGEPKLPCDLNSSSCAAEEDKQSDSGD. The segment covering 339–348 has biased composition (basic and acidic residues); sequence EEDKQSDSGD.

The protein belongs to the lunapark family. In terms of assembly, homodimer; homodimerization requires the C4-type zinc finger motif and decreases during mitosis in a phosphorylation-dependent manner. Post-translationally, phosphorylated. Phosphorylation occurs during interphase. Phosphorylation also occurs during mitosis; these phosphorylations reduce both its homodimerization and the ER three-way tubular junction formation.

It is found in the endoplasmic reticulum membrane. In terms of biological role, endoplasmic reticulum (ER)-shaping membrane protein that plays a role in determining ER morphology. Involved in the stabilization of nascent three-way ER tubular junctions within the ER network. May also play a role as a curvature-stabilizing protein within three-way ER tubular junction network. The protein is Endoplasmic reticulum junction formation protein lunapark-A (lnpka) of Takifugu rubripes (Japanese pufferfish).